Consider the following 127-residue polypeptide: uncharacterized protein (127 aa).

A disordered region spans residues 1–34; it reads MKNPESSGVSSSPQIQRVSPSSSSTSPSPPSIGT. Residues 9 to 34 are compositionally biased toward low complexity; that stretch reads VSSSPQIQRVSPSSSSTSPSPPSIGT. 2 helical membrane passes run 47–67 and 84–104; these read IAAVVVAVDVVDIMSVDPLAM and TIAVDSITLLYTPICLCYLLV.

It is found in the membrane. This is an uncharacterized protein from Saccharomyces cerevisiae (strain ATCC 204508 / S288c) (Baker's yeast).